Consider the following 179-residue polypeptide: Low molecular weight phosphotyrosine protein phosphatase (179 aa).

Catalysis depends on cysteine 15, which acts as the Nucleophile. Arginine 21 is a catalytic residue. Aspartate 148 functions as the Proton donor in the catalytic mechanism.

It belongs to the low molecular weight phosphotyrosine protein phosphatase family.

The protein localises to the cytoplasm. It carries out the reaction O-phospho-L-tyrosyl-[protein] + H2O = L-tyrosyl-[protein] + phosphate. The catalysed reaction is a phosphate monoester + H2O = an alcohol + phosphate. Functionally, acts on tyrosine phosphorylated proteins, low-MW aryl phosphates and natural and synthetic acyl phosphates. The polypeptide is Low molecular weight phosphotyrosine protein phosphatase (acp1) (Dictyostelium discoideum (Social amoeba)).